The following is a 463-amino-acid chain: DNA-binding protein K10 (463 aa).

The span at 1 to 13 (MVSKNQFYQNWTM) shows a compositional bias: polar residues. Residues 1 to 304 (MVSKNQFYQN…RNGPGPGPMM (304 aa)) form a disordered region. Over residues 14-50 (QSQQQHPHQMQQQFQQQQQPNLQHRNNQSNNNNCNNN) the composition is skewed to low complexity. The segment covering 85–94 (QMMFSSSQMP) has biased composition (polar residues). 7 consecutive repeat copies span residues 87–94 (MFSSSQMP), 95–102 (SDPLYIDF), 103–110 (SSPPPGFK), 111–118 (HNQVGSPK), 119–126 (KKSMKGIK), 127–134 (QQQHPSPN), and 135–142 (QQQPPSPN). The tract at residues 87-142 (MFSSSQMPSDPLYIDFSSPPPGFKHNQVGSPKKKSMKGIKQQQHPSPNQQQPPSPN) is 7 X approximate tandem repeats. Residues 142-193 (NQQQHPSPNQQQHPSPNQQQHPNSNQQQHLSPNQQQGKMNNQNNNHMNQSQQ) are compositionally biased toward low complexity. Positions 194-214 (PFNNQMNGSDWQRHPGNNPNQ) are enriched in polar residues. Composition is skewed to pro residues over residues 225-270 (GPPP…PPVP) and 282-291 (GGPPPPPPPL). Residues 397–416 (DELFAQYKGQRDKFVSLYEA) constitute a DNA-binding region (H-T-H motif). Residues 426–463 (AATVKAKDAKSDKDKNAISSQSAAPKAGSAKDATIPNP) are disordered. The segment covering 430–441 (KAKDAKSDKDKN) has biased composition (basic and acidic residues).

Interacts (via N-terminus) with sqd; the interaction is direct and may be involved in localization of sqd to the oocyte during oogenesis.

It is found in the nucleus. May be involved in localization of sqd to the oocyte during oogenesis. This chain is DNA-binding protein K10 (fs(1)K10), found in Drosophila melanogaster (Fruit fly).